The sequence spans 102 residues: Small ribosomal subunit protein uS10 (102 aa).

Belongs to the universal ribosomal protein uS10 family. Part of the 30S ribosomal subunit.

Its function is as follows. Involved in the binding of tRNA to the ribosomes. This Lacticaseibacillus casei (strain BL23) (Lactobacillus casei) protein is Small ribosomal subunit protein uS10.